The sequence spans 2890 residues: Bifunctional DNA-directed RNA polymerase subunit beta-beta' (2890 aa).

The tract at residues 1-1377 (MSKKIPLKNR…DINIFGDDVD (1377 aa)) is DNA-directed RNA polymerase subunit beta. The tract at residues 1384–2890 (PIMIKEDDRP…LRALEDNSKF (1507 aa)) is DNA-directed RNA polymerase subunit beta'. Zn(2+) is bound by residues cysteine 1449, cysteine 1451, cysteine 1465, and cysteine 1468. Residues aspartate 1849, aspartate 1851, and aspartate 1853 each contribute to the Mg(2+) site. Positions 2179, 2253, 2260, and 2263 each coordinate Zn(2+).

It in the N-terminal section; belongs to the RNA polymerase beta chain family. In the C-terminal section; belongs to the RNA polymerase beta' chain family. The RNAP catalytic core consists of 2 alpha, 1 beta/beta' and 1 omega subunit. When a sigma factor is associated with the core the holoenzyme is formed, which can initiate transcription. Mg(2+) serves as cofactor. Requires Zn(2+) as cofactor.

The enzyme catalyses RNA(n) + a ribonucleoside 5'-triphosphate = RNA(n+1) + diphosphate. Functionally, DNA-dependent RNA polymerase catalyzes the transcription of DNA into RNA using the four ribonucleoside triphosphates as substrates. The chain is Bifunctional DNA-directed RNA polymerase subunit beta-beta' (rpoBC) from Helicobacter pylori (strain J99 / ATCC 700824) (Campylobacter pylori J99).